A 297-amino-acid polypeptide reads, in one-letter code: 4-hydroxy-tetrahydrodipicolinate synthase (297 aa).

T49 serves as a coordination point for pyruvate. Y137 functions as the Proton donor/acceptor in the catalytic mechanism. The active-site Schiff-base intermediate with substrate is the K166. I208 is a pyruvate binding site.

Belongs to the DapA family. In terms of assembly, homotetramer; dimer of dimers.

It is found in the cytoplasm. It carries out the reaction L-aspartate 4-semialdehyde + pyruvate = (2S,4S)-4-hydroxy-2,3,4,5-tetrahydrodipicolinate + H2O + H(+). It functions in the pathway amino-acid biosynthesis; L-lysine biosynthesis via DAP pathway; (S)-tetrahydrodipicolinate from L-aspartate: step 3/4. In terms of biological role, catalyzes the condensation of (S)-aspartate-beta-semialdehyde [(S)-ASA] and pyruvate to 4-hydroxy-tetrahydrodipicolinate (HTPA). The sequence is that of 4-hydroxy-tetrahydrodipicolinate synthase from Parabacteroides distasonis (strain ATCC 8503 / DSM 20701 / CIP 104284 / JCM 5825 / NCTC 11152).